We begin with the raw amino-acid sequence, 137 residues long: Large ribosomal subunit protein uL16 (137 aa).

Over residues 1–16 (MLQPKRTKFRKMQKGR) the composition is skewed to basic residues. The disordered stretch occupies residues 1 to 22 (MLQPKRTKFRKMQKGRIRGEAK).

This sequence belongs to the universal ribosomal protein uL16 family. In terms of assembly, part of the 50S ribosomal subunit.

In terms of biological role, binds 23S rRNA and is also seen to make contacts with the A and possibly P site tRNAs. This is Large ribosomal subunit protein uL16 from Jannaschia sp. (strain CCS1).